Here is a 687-residue protein sequence, read N- to C-terminus: Protein-glutamine gamma-glutamyltransferase 2 (687 aa).

Position 2 is an N-acetylalanine (Ala2). Cystine bridges form between Cys230-Cys370 and Cys370-Cys371. Active-site residues include Cys277, His335, and Asp358. 5 residues coordinate Ca(2+): Asn398, Asp400, Glu437, Glu447, and Glu452. Lys468 is subject to N6-acetyllysine. 476-483 (RIRVGEGM) contributes to the GTP binding site. Glu539 is a Ca(2+) binding site. 580-583 (RDIY) is a binding site for GTP. Residue Gln633 forms an Isoglutamyl lysine isopeptide (Gln-Lys) (interchain with K-?) linkage.

The protein belongs to the transglutaminase superfamily. Transglutaminase family. Monomer. Interacts with phospholipase C; promoting alpha-1 adrenergic receptor signaling. Interacts with PLCD1. It depends on Ca(2+) as a cofactor. Post-translationally, disulfide bond formation inactivates the calcium-dependent acyltransferase activity. Cys-370 can form disulfide bonds with both Cys-230 and Cys-371: formation of a disulfide bond between Cys-230 and Cys-370 facilitates formation of the disulfide between Cys-370 and Cys-371, which promotes inactivation of the acyltransferase activity. May also form interchain disulfids between Cys-230 and Cys-370. Ca(2+) protects against disulfide bond formation and inactivation. In terms of processing, auto-transglutaminated: Forms covalent cross-links mediated by transglutaminase between Gln-633 and the epsilon-amino group of a lysine residue of itself or HMGB1, forming homopolymers and heteropolymers, respectively. S-nitrosylated, leading to inactivation of the acyltransferase activity. As to expression, highest levels are detected in the lung. Lower levels are found in the liver, spleen and heart, but not in the brain.

The protein resides in the cytoplasm. It is found in the cytosol. The protein localises to the nucleus. Its subcellular location is the chromosome. It localises to the secreted. The protein resides in the extracellular space. It is found in the extracellular matrix. The protein localises to the cell membrane. Its subcellular location is the mitochondrion. The catalysed reaction is L-glutaminyl-[protein] + L-lysyl-[protein] = [protein]-L-lysyl-N(6)-5-L-glutamyl-[protein] + NH4(+). It carries out the reaction L-glutaminyl-[protein] + serotonin = 5-serotonyl-L-glutamyl-[protein] + NH4(+). The enzyme catalyses L-glutaminyl-[protein] + dopamine = 5-dopaminyl-L-glutamyl-[protein] + NH4(+). It catalyses the reaction L-glutaminyl-[protein] + histamine = 5-histaminyl-L-glutamyl-[protein] + NH4(+). The catalysed reaction is L-glutaminyl-[protein] + (R)-noradrenaline = 5-(R)-noradrenalinyl-L-glutamyl-[protein] + NH4(+). It carries out the reaction L-glutaminyl-[protein] + H2O = L-glutamyl-[protein] + NH4(+). Its activity is regulated as follows. Acyltransferase activity is regulated by the binding of GTP and Ca(2+): inactivated by GTP, which stabilizes its closed structure, thereby obstructing the accessibility of substrates to the active sites. In contrast, Ca(2+) acts as a cofactor by inducing conformational change to the active open form. In absence of Ca(2+), Mg(2+) may bind Ca(2+)-binding sites, promoting GTP-binding and subsequent inhibition of the acyltransferase activity. Extracellularly reduced and activated by CLIC3. Functionally, calcium-dependent acyltransferase that catalyzes the formation of covalent bonds between peptide-bound glutamine and various primary amines, such as gamma-amino group of peptide-bound lysine, or mono- and polyamines, thereby producing cross-linked or aminated proteins, respectively. Involved in many biological processes, such as bone development, angiogenesis, wound healing, cellular differentiation, chromatin modification and apoptosis. Acts as a protein-glutamine gamma-glutamyltransferase by mediating the cross-linking of proteins, such as ACO2, HSPB6, FN1, HMGB1, RAP1GDS1, SLC25A4/ANT1, SPP1 and WDR54. Under physiological conditions, the protein cross-linking activity is inhibited by GTP; inhibition is relieved by Ca(2+) in response to various stresses. When secreted, catalyzes cross-linking of proteins of the extracellular matrix, such as FN1 and SPP1 resulting in the formation of scaffolds. Plays a key role during apoptosis, both by (1) promoting the cross-linking of cytoskeletal proteins resulting in condensation of the cytoplasm, and by (2) mediating cross-linking proteins of the extracellular matrix, resulting in the irreversible formation of scaffolds that stabilize the integrity of the dying cells before their clearance by phagocytosis, thereby preventing the leakage of harmful intracellular components. In addition to protein cross-linking, can use different monoamine substrates to catalyze a vast array of protein post-translational modifications: mediates aminylation of serotonin, dopamine, noradrenaline or histamine into glutamine residues of target proteins to generate protein serotonylation, dopaminylation, noradrenalinylation or histaminylation, respectively. Mediates protein serotonylation of small GTPases during activation and aggregation of platelets, leading to constitutive activation of these GTPases. Plays a key role in chromatin organization by mediating serotonylation and dopaminylation of histone H3. Catalyzes serotonylation of 'Gln-5' of histone H3 (H3Q5ser) during serotonergic neuron differentiation, thereby facilitating transcription. Acts as a mediator of neurotransmission-independent role of nuclear dopamine in ventral tegmental area (VTA) neurons: catalyzes dopaminylation of 'Gln-5' of histone H3 (H3Q5dop), thereby regulating relapse-related transcriptional plasticity in the reward system. Regulates vein remodeling by mediating serotonylation and subsequent inactivation of ATP2A2/SERCA2. Also acts as a protein deamidase by mediating the side chain deamidation of specific glutamine residues of proteins to glutamate. Catalyzes specific deamidation of protein gliadin, a component of wheat gluten in the diet. May also act as an isopeptidase cleaving the previously formed cross-links. Also able to participate in signaling pathways independently of its acyltransferase activity: acts as a signal transducer in alpha-1 adrenergic receptor-mediated stimulation of phospholipase C-delta (PLCD) activity and is required for coupling alpha-1 adrenergic agonists to the stimulation of phosphoinositide lipid metabolism. In Bos taurus (Bovine), this protein is Protein-glutamine gamma-glutamyltransferase 2.